Here is a 280-residue protein sequence, read N- to C-terminus: Formyltetrahydrofolate deformylase (280 aa).

An ACT domain is found at 8 to 86 (VLRTICPDQK…RELNPAGRRR (79 aa)). Aspartate 225 is an active-site residue.

Belongs to the PurU family. In terms of assembly, homohexamer.

It carries out the reaction (6R)-10-formyltetrahydrofolate + H2O = (6S)-5,6,7,8-tetrahydrofolate + formate + H(+). It participates in purine metabolism; IMP biosynthesis via de novo pathway; formate from 10-formyl-5,6,7,8-tetrahydrofolate: step 1/1. Its activity is regulated as follows. Activated by methionine, inhibited by glycine. Its function is as follows. Catalyzes the hydrolysis of 10-formyltetrahydrofolate (formyl-FH4) to formate and tetrahydrofolate (FH4). Provides the major source of formate for the PurT-dependent synthesis of 5'-phosphoribosyl-N-formylglycinamide (FGAR) during aerobic growth. Has a role in regulating the one-carbon pool. This Escherichia coli (strain K12) protein is Formyltetrahydrofolate deformylase.